Consider the following 350-residue polypeptide: Heme A synthase (350 aa).

Transmembrane regions (helical) follow at residues 14-34 (VAIWLFLCSVMVILMVGIGGF), 95-115 (YVHRLVARLTGLVFVLPFIYF), 125-145 (VVIKLFVALLFGALQAFAGWY), 162-182 (LALHLLLALIIFALFSYQFFD), 202-222 (VGIILVLIMIQIIFGAFVAGL), 260-280 (VQFIHRALALLILTLVVILTV), 296-316 (IIQIILGVITLLLHIPIAIAI), and 317-337 (AHQVFSFILFGSSLYFLCYLR). Histidine 264 is a heme binding site. Histidine 318 contacts heme.

This sequence belongs to the COX15/CtaA family. Type 2 subfamily. In terms of assembly, interacts with CtaB. Heme b serves as cofactor.

It is found in the cell membrane. It catalyses the reaction Fe(II)-heme o + 2 A + H2O = Fe(II)-heme a + 2 AH2. The protein operates within porphyrin-containing compound metabolism; heme A biosynthesis; heme A from heme O: step 1/1. Catalyzes the conversion of heme O to heme A by two successive hydroxylations of the methyl group at C8. The first hydroxylation forms heme I, the second hydroxylation results in an unstable dihydroxymethyl group, which spontaneously dehydrates, resulting in the formyl group of heme A. This is Heme A synthase from Wolbachia pipientis wMel.